We begin with the raw amino-acid sequence, 386 residues long: Microtubule-binding protein TANGLED1 (386 aa).

Disordered stretches follow at residues 83–105, 140–202, 244–266, 303–330, and 345–386; these read RMRG…GVGG, AAGA…RVRS, HAST…QKRL, PARP…CSFS, and RLSL…ISSR. Residues 170-180 are compositionally biased toward basic residues; it reads RARRAREKQSH. Residues 181–193 show a composition bias toward low complexity; the sequence is RGGAATRGADAAT. The span at 375 to 386 shows a compositional bias: polar residues; that stretch reads TVRTVSSKISSR.

Expressed in vegetative shoot tips consisting of leaf primordia and the bases of immature leaves, the shoot apical meristem, and unexpanded stem tissue. Strongly expressed in tissues enriched in dividing cells: ear primordia and embryos.

The protein localises to the cytoplasm. It is found in the cytoskeleton. It localises to the spindle. The protein resides in the phragmoplast. In terms of biological role, is required for spatial control cell division during leaf development. Through an association with microtubules, acts both for the positioning of cytoskeletal arrays that establish planes of cell division during prophase and for spatial guidance of expanding phragmoplasts toward preestablished cortical division sites (CDS) during cytokinesis. This is Microtubule-binding protein TANGLED1 (TAN1) from Zea mays (Maize).